Consider the following 395-residue polypeptide: MNPSSVPHPLPPPGQQVIHVTQDLDTDLEALFNSVMNPKPSSWRKKILPESFFKEPDSGSHSRQSSTDSSGGHPGPRLAGGAQHVRSHSSPASLQLGTGAGAAGGPAQQHAHLRQQSYDVTDELPLPPGWEMTFTATGQRYFLNHIEKITTWQDPRKVMNQPLNHVNLHPSITSTSVPQRSMAVSQPNLAMNHQHQQVVATSLSPQNHPTQNQPTGLMSVPNALTTQQQQQQKLRLQRIQMERERIRMRQEELMRQEAALCRQLPMETETMAPVNTPAMSTDMRSVTNSSSDPFLNGGPYHSREQSTDSGLGLGCYSVPTTPEDFLSNMDEMDTGENSGQTPMTVNPQQTRFPDFLDCLPGTNVDLGTLESEDLIPLFNDVESALNKSEPFLTWL.

Lys46 is covalently cross-linked (Glycyl lysine isopeptide (Lys-Gly) (interchain with G-Cter in ubiquitin)). Residues 52-116 are disordered; it reads FFKEPDSGSH…AQQHAHLRQQ (65 aa). Positions 61-70 are enriched in polar residues; that stretch reads HSRQSSTDSS. Position 62 is a phosphoserine (Ser62). Ser89 carries the phosphoserine; by LATS2 modification. In terms of domain architecture, WW spans 124-157; sequence LPLPPGWEMTFTATGQRYFLNHIEKITTWQDPRK. Residues 221–395 form a required for interaction with PALS1 region; it reads PNALTTQQQQ…NKSEPFLTWL (175 aa). Positions 224 to 258 form a coiled coil; that stretch reads LTTQQQQQQKLRLQRIQMERERIRMRQEELMRQEA. Over residues 277 to 293 the composition is skewed to polar residues; it reads PAMSTDMRSVTNSSSDP. The interval 277 to 308 is disordered; sequence PAMSTDMRSVTNSSSDPFLNGGPYHSREQSTD. Ser290 is modified (phosphoserine). Position 306 is a phosphoserine; by LATS2 (Ser306). A PDZ-binding motif is present at residues 389–395; that stretch reads EPFLTWL.

In terms of assembly, binds to SLC9A3R2 via the PDZ motif at the plasma membrane. Binds to YWHAZ in vivo and in vitro through the phosphoserine-binding motif RSHSSP. Interacts (via coiled-coil domain) with SMAD2 (via MH1 domain), SMAD3 and SMAD4. Interacts with MED15. Interacts with PAX8 and NKX2-1. Interacts with TEAD1, TEAD2, TEAD3 and TEAD4. Interacts (via WW domain) with PALS1. Interacts with LATS1. Interacts with YAP1 (when phosphorylated at 'Ser-112'). Interacts (via WW domain) with PRRG4 (via cytoplasmic domain). Interacts (via WW domain) with AMOTL2 (via PPXY motif); the interaction promotes WWTR1/TAZ localization to the cytoplasm and tight junctions, thereby inhibiting its transcriptional coactivator properties. Interacts (via WW domain) with AMOT; the interaction facilitates translocation of WWTR1/TAZ to the cytoplasm. In terms of processing, phosphorylated by LATS2 and STK3/MST2. Phosphorylation by LATS2 results in creation of 14-3-3 binding sites, retention in the cytoplasm, and functional inactivation. Phosphorylation results in the inhibition of transcriptional coactivation through YWHAZ-mediated nuclear export. Ubiquitinated at Lys-46; leading to proteasomal degradation. Deubiquitinated and stabilized by UCHL1 at Lys-46; leading to inhibition of osteoclastogenesis. In terms of tissue distribution, highly expressed in kidney, heart, placenta and lung.

The protein resides in the nucleus. Its subcellular location is the cytoplasm. The protein localises to the cell membrane. It is found in the cell junction. It localises to the tight junction. Transcriptional coactivator which acts as a downstream regulatory target in the Hippo signaling pathway that plays a pivotal role in organ size control and tumor suppression by restricting proliferation and promoting apoptosis. The core of this pathway is composed of a kinase cascade wherein STK3/MST2 and STK4/MST1, in complex with its regulatory protein SAV1, phosphorylates and activates LATS1/2 in complex with its regulatory protein MOB1, which in turn phosphorylates and inactivates YAP1 oncoprotein and WWTR1/TAZ. WWTR1 enhances PAX8 and NKX2-1/TTF1-dependent gene activation. In conjunction with YAP1, involved in the regulation of TGFB1-dependent SMAD2 and SMAD3 nuclear accumulation. Plays a key role in coupling SMADs to the transcriptional machinery such as the mediator complex. Regulates embryonic stem-cell self-renewal, promotes cell proliferation and epithelial-mesenchymal transition. The protein is WW domain-containing transcription regulator protein 1 of Mus musculus (Mouse).